Reading from the N-terminus, the 662-residue chain is PAN2-PAN3 deadenylation complex subunit PAN3 (662 aa).

Disordered regions lie at residues 1 to 26 (MASA…AREN) and 59 to 131 (TTYQ…RAET). A C3H1-type zinc finger spans residues 26–55 (NAKDTLCRNVTIYGRCRYEDKGCAFNHDPH). The span at 72 to 85 (DSPSFTPSLLSSNG) shows a compositional bias: polar residues. Residues 86 to 102 (SSPTTASVTAKKAATIS) are compositionally biased toward low complexity. Over residues 114–126 (RNITSRSNTSTPS) the composition is skewed to polar residues. A pseudokinase domain region spans residues 265–525 (QTLPNTQLPA…NIDIFITGIS (261 aa)). Residues Arg317, 366 to 373 (DYHPLSKT), and 425 to 426 (SK) each bind ATP. Residues 526–564 (SQLMSTFDSALHLDDELTSDLSRELENGRLVRLVTKLNF) are a coiled coil. Residues 565-662 (VNERPEYEHD…ALLKPTRRLH (98 aa)) form a knob domain region.

The protein belongs to the protein kinase superfamily. PAN3 family. As to quaternary structure, homodimer. Forms a heterotrimer with a catalytic subunit pan2 to form the poly(A)-nuclease (PAN) deadenylation complex. Interacts (via PAM-2 motif) with poly(A)-binding protein pab1 (via PABC domain), conferring substrate specificity of the enzyme complex.

The protein localises to the cytoplasm. Regulatory subunit of the poly(A)-nuclease (PAN) deadenylation complex, one of two cytoplasmic mRNA deadenylases involved in mRNA turnover. PAN specifically shortens poly(A) tails of RNA and the activity is stimulated by poly(A)-binding protein pab1. PAN deadenylation is followed by rapid degradation of the shortened mRNA tails by the CCR4-NOT complex. Deadenylated mRNAs are then degraded by two alternative mechanisms, namely exosome-mediated 3'-5' exonucleolytic degradation, or deadenylation-dependent mRNA decaping and subsequent 5'-3' exonucleolytic degradation by xrn1. May also be involved in post-transcriptional maturation of mRNA poly(A) tails. pan3 acts as a positive regulator for PAN activity, recruiting the catalytic subunit pan2 to mRNA via its interaction with RNA and with pab1. The chain is PAN2-PAN3 deadenylation complex subunit PAN3 from Aspergillus oryzae (strain ATCC 42149 / RIB 40) (Yellow koji mold).